A 66-amino-acid chain; its full sequence is Beta-mammal toxin Cv2 (66 aa).

In terms of domain architecture, LCN-type CS-alpha/beta spans 1-66 (KEGYIVNHST…VWPLPKKTCN (66 aa)). Cystine bridges form between Cys-12–Cys-65, Cys-16–Cys-41, Cys-25–Cys-46, and Cys-29–Cys-48.

In terms of tissue distribution, expressed by the venom gland.

It is found in the secreted. With respect to regulation, is susceptible to be slightly neutralized by human antibodies scFvs 10FG2. Beta toxins bind voltage-independently at site-4 of sodium channels (Nav) and reduces peak current and shifts the voltage of activation toward more negative potentials thereby affecting sodium channel activation and promoting spontaneous and repetitive firing. This toxin is slightly toxic to mice. The polypeptide is Beta-mammal toxin Cv2 (Centruroides villegasi (Scorpion)).